Reading from the N-terminus, the 79-residue chain is Quinohemoprotein amine dehydrogenase subunit gamma (79 aa).

The 4-cysteinyl-glutamic acid (Cys-Glu) cross-link spans 7–16 (CTATTDPGWE). Cross-links (3-cysteinyl-aspartic acid (Cys-Asp)) lie at residues 27 to 33 (CQPMEAD) and 41 to 49 (CWWPAQVPD). The active-site Proton acceptor is D33. The 4'-cysteinyl-tryptophylquinone (Cys-Trp) cross-link spans 37-43 (CSDPCWW). A Tryptophylquinone modification is found at W43.

This sequence belongs to the quinohemoprotein amine dehydrogenase subunit gamma family. In terms of assembly, heterotrimer of an alpha, a beta and a gamma subunit. Cysteine tryptophylquinone residue is required as a cofactor. The cysteine tryptophylquinone (CTQ) is generated by oxidation of the indole ring of a tryptophan residue to form tryptophylquinone, followed by covalent cross-linking with a cysteine residue.

It localises to the periplasm. The catalysed reaction is an aliphatic amine + A + H2O = an aldehyde + AH2 + NH4(+). Its function is as follows. Catalyzes the oxidative deamination of a wide range of aliphatic monoamines and diamines. The physiological electron acceptor is an azurin-like blue protein. This chain is Quinohemoprotein amine dehydrogenase subunit gamma (qhnDH), found in Pseudomonas putida (strain ATCC 47054 / DSM 6125 / CFBP 8728 / NCIMB 11950 / KT2440).